Here is a 349-residue protein sequence, read N- to C-terminus: DNA replication and repair protein RecF (349 aa).

Position 29–36 (Gly29–Thr36) interacts with ATP.

This sequence belongs to the RecF family.

It is found in the cytoplasm. The RecF protein is involved in DNA metabolism; it is required for DNA replication and normal SOS inducibility. RecF binds preferentially to single-stranded, linear DNA. It also seems to bind ATP. The chain is DNA replication and repair protein RecF from Acholeplasma laidlawii (strain PG-8A).